A 185-amino-acid chain; its full sequence is Dirigent protein 12 (185 aa).

The N-terminal stretch at 1-25 (MTNQIYKQVFSFFLSVLLLQSSTVS) is a signal peptide. A disulfide bridge links C37 with C184. Residues N56 and N120 are each glycosylated (N-linked (GlcNAc...) asparagine).

Belongs to the plant dirigent protein family. In terms of assembly, homodimer. Seed coat specific expression.

It localises to the secreted. It is found in the extracellular space. Its subcellular location is the apoplast. Its function is as follows. Dirigent proteins impart stereoselectivity on the phenoxy radical-coupling reaction, yielding optically active lignans from two molecules of coniferyl alcohol in the biosynthesis of lignans, flavonolignans, and alkaloids and thus plays a central role in plant secondary metabolism. Required for seed accumulation of neolignans. This chain is Dirigent protein 12 (DIR12), found in Arabidopsis thaliana (Mouse-ear cress).